The chain runs to 198 residues: Putative protein-methionine-sulfoxide reductase subunit YedZ1 (198 aa).

4 helical membrane passes run W12 to W32, F63 to S83, A124 to W144, and F167 to V187.

This sequence belongs to the HupC/HyaC/HydC family.

The protein localises to the cell inner membrane. In terms of biological role, part of the YedY1-YedZ1 system that may repair oxidized proteins containing methionine sulfoxide residues (Met-O). The polypeptide is Putative protein-methionine-sulfoxide reductase subunit YedZ1 (Azospira oryzae (strain ATCC BAA-33 / DSM 13638 / PS) (Dechlorosoma suillum)).